The following is a 208-amino-acid chain: dITP/XTP pyrophosphatase (208 aa).

15-20 (SHNAGK) lines the substrate pocket. Glu47 and Asp76 together coordinate Mg(2+). Asp76 acts as the Proton acceptor in catalysis. Residues Ser77, 157–160 (HGYD), Lys180, and 185–186 (HR) each bind substrate.

This sequence belongs to the HAM1 NTPase family. In terms of assembly, homodimer. The cofactor is Mg(2+).

It carries out the reaction XTP + H2O = XMP + diphosphate + H(+). The catalysed reaction is dITP + H2O = dIMP + diphosphate + H(+). It catalyses the reaction ITP + H2O = IMP + diphosphate + H(+). In terms of biological role, pyrophosphatase that catalyzes the hydrolysis of nucleoside triphosphates to their monophosphate derivatives, with a high preference for the non-canonical purine nucleotides XTP (xanthosine triphosphate), dITP (deoxyinosine triphosphate) and ITP. Seems to function as a house-cleaning enzyme that removes non-canonical purine nucleotides from the nucleotide pool, thus preventing their incorporation into DNA/RNA and avoiding chromosomal lesions. The chain is dITP/XTP pyrophosphatase from Gluconobacter oxydans (strain 621H) (Gluconobacter suboxydans).